Here is a 286-residue protein sequence, read N- to C-terminus: Gap junction alpha-6 protein (286 aa).

The Cytoplasmic segment spans residues 1–23 (MSDWSALHQLLEKVQPYSTAGGK). Residues 24–41 (VWIKVLFIFRILLLGTAI) traverse the membrane as a helical segment. At 42–76 (ESAWSDEQFEFHCNTQQPGCENVCYDQAFPISHVR) the chain is on the extracellular side. The helical transmembrane segment at 77–99 (LWVLQVIFVSVPTLLHLAHVYYV) threads the bilayer. Residues 100–151 (IRQNEKLKKQEEEELKVAHFNGASGERRLQKHTGKHIKCGSKEHGNRKMRGR) lie on the Cytoplasmic side of the membrane. Residues 152 to 174 (LLLTYMASIFFKSVFEVAFLLIQ) traverse the membrane as a helical segment. The Extracellular portion of the chain corresponds to 175–209 (WYLYGFTLSAVYICEQSPCPHRVDCFLSRPTEKTI). Residues 210–232 (FILFMLVVSMVSFVLNVIELFYV) traverse the membrane as a helical segment. The Cytoplasmic portion of the chain corresponds to 233 to 286 (LFKAIKNHLGNEKEEVYCNPVELQKPSCVSSSAVLTTICSSDQVVPVGLSSFYM).

This sequence belongs to the connexin family. Alpha-type (group II) subfamily. In terms of assembly, a connexon is composed of a hexamer of connexins. Expressed in testis.

Its subcellular location is the cell membrane. The protein resides in the cell junction. It is found in the gap junction. Its function is as follows. One gap junction consists of a cluster of closely packed pairs of transmembrane channels, the connexons, through which materials of low MW diffuse from one cell to a neighboring cell. This chain is Gap junction alpha-6 protein (Gja6), found in Rattus norvegicus (Rat).